A 131-amino-acid chain; its full sequence is Profilin-2 (131 aa).

The protein belongs to the profilin family. In terms of assembly, occurs in many kinds of cells as a complex with monomeric actin in a 1:1 ratio.

Its subcellular location is the cytoplasm. The protein resides in the cytoskeleton. Binds to actin and affects the structure of the cytoskeleton. At high concentrations, profilin prevents the polymerization of actin, whereas it enhances it at low concentrations. By binding to PIP2, it inhibits the formation of IP3 and DG. The sequence is that of Profilin-2 from Malus domestica (Apple).